The following is a 265-amino-acid chain: Mlc titration factor A (265 aa).

Zn(2+) contacts are provided by His-111, His-148, His-152, and Glu-211.

The protein belongs to the MtfA family. In terms of assembly, interacts with Mlc. It depends on Zn(2+) as a cofactor.

The protein localises to the cytoplasm. Its function is as follows. Involved in the modulation of the activity of the glucose-phosphotransferase system (glucose-PTS). Interacts with the transcriptional repressor Mlc, preventing its interaction with DNA and leading to the modulation of expression of genes regulated by Mlc, including ptsG, which encodes the PTS system glucose-specific EIICB component. Functionally, shows zinc-dependent metallopeptidase activity. In Shigella dysenteriae serotype 1 (strain Sd197), this protein is Mlc titration factor A.